The primary structure comprises 415 residues: Multidrug resistance protein MdtA (415 aa).

Positions 1-21 (MKGSYKSRWVIVIVVVIAAIA) are cleaved as a signal peptide. A compositionally biased stretch (polar residues) spans 34–47 (SAAPGATKQAQQSP). 2 disordered regions span residues 34 to 60 (SAAP…GPLA) and 392 to 415 (EAQS…GARS). Basic and acidic residues predominate over residues 399 to 415 (PEEKATSREYAKKGARS).

It belongs to the membrane fusion protein (MFP) (TC 8.A.1) family. As to quaternary structure, part of a tripartite efflux system composed of MdtA, MdtB and MdtC.

The protein localises to the cell inner membrane. The MdtABC tripartite complex confers resistance against novobiocin and deoxycholate. The sequence is that of Multidrug resistance protein MdtA from Escherichia fergusonii (strain ATCC 35469 / DSM 13698 / CCUG 18766 / IAM 14443 / JCM 21226 / LMG 7866 / NBRC 102419 / NCTC 12128 / CDC 0568-73).